The sequence spans 282 residues: Cholesterol 25-hydroxylase-like protein 1, member 1 (282 aa).

Residue Asn3 is glycosylated (N-linked (GlcNAc...) asparagine). The next 3 membrane-spanning stretches (helical) occupy residues 40–60 (FFPV…FAVL), 85–107 (MLRT…VLIT), and 127–147 (FSGG…WHMV). The 133-residue stretch at 133–265 (ALLVFDTQYF…FSHWDKIFGT (133 aa)) folds into the Fatty acid hydroxylase domain. The Histidine box-1 signature appears at 144–148 (WHMVH). The short motif at 159 to 163 (HAIHH) is the Histidine box-2 element. The Histidine box-3 motif lies at 240–246 (AHDMHHQ).

Belongs to the sterol desaturase family. Requires Fe cation as cofactor.

It localises to the endoplasmic reticulum membrane. In terms of biological role, may catalyze the formation of 25-hydroxycholesterol from cholesterol. This chain is Cholesterol 25-hydroxylase-like protein 1, member 1 (ch25hl1.1), found in Danio rerio (Zebrafish).